Consider the following 131-residue polypeptide: C-type natriuretic peptide 2 (131 aa).

A signal peptide spans 1 to 22 (MLYPALLCAALLLIAPLGHTEG). A propeptide spanning residues 23-109 (RTLYPSPDAI…KRAVTDRSRR (87 aa)) is cleaved from the precursor. Cysteine 115 and cysteine 131 form a disulfide bridge.

It belongs to the natriuretic peptide family. Expressed in brain and to a low extent in atrium.

The protein resides in the secreted. Functionally, exhibits natriuretic and vasodepressor activity. Has a cGMP-stimulating activity. This chain is C-type natriuretic peptide 2, found in Oncorhynchus mykiss (Rainbow trout).